The chain runs to 415 residues: Putative F-box/FBD/LRR-repeat protein At3g49040 (415 aa).

An F-box domain is found at 10 to 58; it reads EDRISELHEALLVHIMSSLPTKTVVATSVLSKRWRHVWKTVQNLKFVSK. LRR repeat units lie at residues 60-86, 87-114, 143-170, 171-196, and 213-241; these read HQTF…DLEF, SNQL…VLDL, TLTL…HLYK, VHFY…IVHR, and RLTI…NIRR. The FBD domain maps to 272-377; it reads ILESLTSAKR…TSLKKATFST (106 aa).

The protein is Putative F-box/FBD/LRR-repeat protein At3g49040 of Arabidopsis thaliana (Mouse-ear cress).